The following is a 176-amino-acid chain: Large ribosomal subunit protein uL10 (176 aa).

The protein belongs to the universal ribosomal protein uL10 family. In terms of assembly, part of the ribosomal stalk of the 50S ribosomal subunit. The N-terminus interacts with L11 and the large rRNA to form the base of the stalk. The C-terminus forms an elongated spine to which L12 dimers bind in a sequential fashion forming a multimeric L10(L12)X complex.

Functionally, forms part of the ribosomal stalk, playing a central role in the interaction of the ribosome with GTP-bound translation factors. The chain is Large ribosomal subunit protein uL10 from Streptomyces avermitilis (strain ATCC 31267 / DSM 46492 / JCM 5070 / NBRC 14893 / NCIMB 12804 / NRRL 8165 / MA-4680).